Consider the following 123-residue polypeptide: Large ribosomal subunit protein uL22 (123 aa).

It belongs to the universal ribosomal protein uL22 family. In terms of assembly, part of the 50S ribosomal subunit.

This protein binds specifically to 23S rRNA; its binding is stimulated by other ribosomal proteins, e.g. L4, L17, and L20. It is important during the early stages of 50S assembly. It makes multiple contacts with different domains of the 23S rRNA in the assembled 50S subunit and ribosome. In terms of biological role, the globular domain of the protein is located near the polypeptide exit tunnel on the outside of the subunit, while an extended beta-hairpin is found that lines the wall of the exit tunnel in the center of the 70S ribosome. The protein is Large ribosomal subunit protein uL22 of Synechococcus sp. (strain JA-3-3Ab) (Cyanobacteria bacterium Yellowstone A-Prime).